We begin with the raw amino-acid sequence, 398 residues long: 2-epi-5-epi-valiolone synthase (398 aa).

NAD(+)-binding positions include aspartate 62, 93-96, 126-130, 150-151, lysine 163, lysine 172, and 190-193; these read ETVK, GVLMD, TT, and FLAT. Residue lysine 163 is part of the active site. The a divalent metal cation site is built by glutamate 205, histidine 276, and histidine 292.

This sequence belongs to the sugar phosphate cyclases superfamily. EEVS family. Requires NAD(+) as cofactor. It depends on Co(2+) as a cofactor.

It carries out the reaction D-sedoheptulose 7-phosphate = 2-epi-5-epi-valiolone + phosphate. Functionally, catalyzes the cyclization of D-sedoheptulose 7-phosphate to 2-epi-5-epi-valiolone. Does not use ido-heptulose 7-phosphate and 3-deoxy-arabino-heptulosonate 7-phosphate. Involved in the biosynthesis of the acarviose moiety of the alpha-glucosidase inhibitor acarbose. The sequence is that of 2-epi-5-epi-valiolone synthase from Actinoplanes sp. (strain ATCC 31044 / CBS 674.73 / SE50/110).